We begin with the raw amino-acid sequence, 362 residues long: Oxygen-dependent coproporphyrinogen-III oxidase (362 aa).

Residue Ser118 participates in substrate binding. Positions 122 and 132 each coordinate a divalent metal cation. His132 serves as the catalytic Proton donor. 134 to 136 (NYR) lines the substrate pocket. Positions 166 and 196 each coordinate a divalent metal cation. The tract at residues 286–321 (YVEFNLVWDRGTIFGLQTNGRTESILMSLPPLVRWE) is important for dimerization.

Belongs to the aerobic coproporphyrinogen-III oxidase family. Homodimer. A divalent metal cation is required as a cofactor.

It localises to the cytoplasm. The catalysed reaction is coproporphyrinogen III + O2 + 2 H(+) = protoporphyrinogen IX + 2 CO2 + 2 H2O. Its pathway is porphyrin-containing compound metabolism; protoporphyrin-IX biosynthesis; protoporphyrinogen-IX from coproporphyrinogen-III (O2 route): step 1/1. Involved in the heme and chlorophyll biosynthesis. Catalyzes the aerobic oxidative decarboxylation of propionate groups of rings A and B of coproporphyrinogen-III to yield the vinyl groups in protoporphyrinogen-IX. In Synechococcus sp. (strain CC9605), this protein is Oxygen-dependent coproporphyrinogen-III oxidase.